The chain runs to 220 residues: Ribose-5-phosphate isomerase A (220 aa).

Residues 25 to 28 (TGST), 80 to 83 (DGAD), and 93 to 96 (KGGG) contribute to the substrate site. Residue Glu102 is the Proton acceptor of the active site. Lys120 contributes to the substrate binding site.

The protein belongs to the ribose 5-phosphate isomerase family. As to quaternary structure, homodimer.

The enzyme catalyses aldehydo-D-ribose 5-phosphate = D-ribulose 5-phosphate. It functions in the pathway carbohydrate degradation; pentose phosphate pathway; D-ribose 5-phosphate from D-ribulose 5-phosphate (non-oxidative stage): step 1/1. Its function is as follows. Catalyzes the reversible conversion of ribose-5-phosphate to ribulose 5-phosphate. This Bacillus cereus (strain ATCC 10987 / NRS 248) protein is Ribose-5-phosphate isomerase A.